The primary structure comprises 523 residues: Putative L-type lectin-domain containing receptor kinase V.6 (523 aa).

The N-terminal stretch at Met-1–Gly-27 is a signal peptide. The legume-lectin like stretch occupies residues Thr-28–Met-242. Over Thr-28–Leu-279 the chain is Extracellular. Asn-47, Asn-59, Asn-112, and Asn-171 each carry an N-linked (GlcNAc...) asparagine glycan. The chain crosses the membrane as a helical span at residues Ala-280–Phe-300. Residues Tyr-301–Phe-523 are Cytoplasmic-facing. Residues Phe-335–Phe-523 form the Protein kinase domain. Residues Leu-341–Val-349 and Lys-364 contribute to the ATP site. Residue Asp-464 is the Proton acceptor of the active site.

In the C-terminal section; belongs to the protein kinase superfamily. Ser/Thr protein kinase family. The protein in the N-terminal section; belongs to the leguminous lectin family.

It is found in the cell membrane. The enzyme catalyses L-seryl-[protein] + ATP = O-phospho-L-seryl-[protein] + ADP + H(+). It carries out the reaction L-threonyl-[protein] + ATP = O-phospho-L-threonyl-[protein] + ADP + H(+). The protein is Putative L-type lectin-domain containing receptor kinase V.6 (LECRK56) of Arabidopsis thaliana (Mouse-ear cress).